A 162-amino-acid polypeptide reads, in one-letter code: MEGSDNTNTHCWICKDEYNVSTNFCNCKNEFKIVHKNCLEEWINFSHNTKCKICNGKYNIKKNKKSCLRWKCSFMYCNVPAICVSLICLLLLPLTILLVKFNLKSMLENIENRDLIALISAMAYSLPCVVGFITVVHILIALYDYYLAAKSDNTTYQVYEYI.

The Cytoplasmic segment spans residues 1–78; sequence MEGSDNTNTH…RWKCSFMYCN (78 aa). The RING-CH-type zinc finger occupies 3-61; the sequence is GSDNTNTHCWICKDEYNVSTNFCNCKNEFKIVHKNCLEEWINFSHNTKCKICNGKYNIK. Cysteine 11, cysteine 14, cysteine 25, cysteine 27, histidine 35, cysteine 38, cysteine 51, and cysteine 54 together coordinate Zn(2+). Residues 79-99 traverse the membrane as a helical segment; that stretch reads VPAICVSLICLLLLPLTILLV. Residues 100–121 are Lumenal-facing; the sequence is KFNLKSMLENIENRDLIALISA. A helical membrane pass occupies residues 122-142; that stretch reads MAYSLPCVVGFITVVHILIAL. Over 143-162 the chain is Cytoplasmic; the sequence is YDYYLAAKSDNTTYQVYEYI.

The protein belongs to the poxviridae LAP protein family.

The protein resides in the host membrane. Its subcellular location is the host Golgi apparatus. It is found in the host trans-Golgi network membrane. It localises to the host early endosome membrane. It catalyses the reaction S-ubiquitinyl-[E2 ubiquitin-conjugating enzyme]-L-cysteine + [acceptor protein]-L-lysine = [E2 ubiquitin-conjugating enzyme]-L-cysteine + N(6)-ubiquitinyl-[acceptor protein]-L-lysine.. Functionally, E3 ubiquitin-protein ligase which promotes ubiquitination and subsequent degradation of host MHC-I and CD4 molecules, presumably to prevent lysis of infected cells by cytotoxic T-lymphocytes and NK cell. Binds target molecules through transmembrane interaction. The result of this ubiquitination is the enhancement of the endocytosis of the target chain and the delivery to the lysosome, where it is proteolytically destroyed. The protein is E3 ubiquitin-protein ligase LAP (LW010) of Lumpy skin disease virus (LSDV).